Here is a 552-residue protein sequence, read N- to C-terminus: Urocanate hydratase (552 aa).

NAD(+) is bound by residues 49-50, Gln127, 173-175, Glu193, Arg198, 239-240, 260-264, 270-271, and Tyr319; these read GG, GMG, NA, QTSAH, and YI. Cys407 is a catalytic residue. Position 489 (Gly489) interacts with NAD(+).

Belongs to the urocanase family. Requires NAD(+) as cofactor.

Its subcellular location is the cytoplasm. The catalysed reaction is 4-imidazolone-5-propanoate = trans-urocanate + H2O. It functions in the pathway amino-acid degradation; L-histidine degradation into L-glutamate; N-formimidoyl-L-glutamate from L-histidine: step 2/3. In terms of biological role, catalyzes the conversion of urocanate to 4-imidazolone-5-propionate. The polypeptide is Urocanate hydratase (Geobacillus sp. (strain WCH70)).